The chain runs to 364 residues: Aminomethyltransferase (364 aa).

It belongs to the GcvT family. The glycine cleavage system is composed of four proteins: P, T, L and H.

The catalysed reaction is N(6)-[(R)-S(8)-aminomethyldihydrolipoyl]-L-lysyl-[protein] + (6S)-5,6,7,8-tetrahydrofolate = N(6)-[(R)-dihydrolipoyl]-L-lysyl-[protein] + (6R)-5,10-methylene-5,6,7,8-tetrahydrofolate + NH4(+). Its function is as follows. The glycine cleavage system catalyzes the degradation of glycine. The sequence is that of Aminomethyltransferase from Anoxybacillus flavithermus (strain DSM 21510 / WK1).